The following is a 1155-amino-acid chain: MSHGTKYRDALLFSLTLYDVNTGKSRLKELYAAVPGIRKSLLGVHAKRFGEQYHHLQRRRSVSSRGGSLRGSMDSLNDSGQNGAEDVIGVEDEEEAQKFRGKRTSISLDPAAAGEVMFTIEDGACFPSGGLANTHFQQRVINVSNAPPVSLKREKSGEWEIKQGSGGLVSCVDPIMSVNQENMWLANLGMNIDKKKMLRSTELLNVTDDSAPLAPATNTLGLPLMRQALADVLFHVIADDDIKEQNEDEQSRNVRWGHSSVEAGGVAPSQPWEEMSLLGVLNQYNRSNYKLNPVVVQEQDYNVYYGGISNGLLWPALHNLPEYIVADYDDPKVLYEHWCAYVRVNYQFAIDAVRNSRPQDFIWIHDYHLMLTGMIMQSLDSSLEIGFFLHIPFLPPDNFFTKYRLCAFPIMRGLLRFTKVGFQTHRDRAKFVELVGIHLPTARVTYDEKMDIHTVTYQGWSCSLGVFPVSIKNEDFLKVAQSAETIKKADDIRKEILGETPVDSARLLFSVERFDYTKGIKEKLLAYRRYFERHPDRIGKDVLYQVAVTNRRSVDTYRMYQDECIQMAEDINREFATDEYPNWKPLIFRTDGLQRADLVAHYLAMDVGVVTPKKDGMNLVAKEMLVCNPSAGLVLSTGAGSEIQFTMAGLHPDDGDKCYHRVVDVYDADHYADAFYEAAVEPEGERAAHGQRLNEFIMNNDIERWSTAFLDPGWSHLVIRQSEIKDLDDFYSLMMRTRDVRRQIVERVLKGIPIRSHFSISLSNTKESLLLACQPGTRTLHLKPSLEEDEQTEPAHFDIANELDEFEKDLNFMKFIQSDDVYNVEQFINSLQEYHPVSADKFRDEVIELGDVLTEADHFNFFFTDRDGTLKSYSCSYPASIQPAYSGVIQAQFARRCAQTCAIVTTAPLMRIGVLDVSTIPEGYYYFGASAGREWFIDPANKFKDQSIPEEDLELLERVFAAISDLLEEPKFKHFTWVGSGLQKHYGHITIAHQDAFNSVPRHQVRAIDQKIKDIIHRIDPDQHTLKVKETETDIKIFLKSESGEIFDKGQGIRLLVEHMKCDISNGTILVCGDSSTDLPMLQACLEANPSGVYTVWVTRSDELKTTVRELCERFGNKNFVFVSCPEVLLGGMAQATIREISIGRPGPRASHDSE.

The tract at residues 56 to 94 (LQRRRSVSSRGGSLRGSMDSLNDSGQNGAEDVIGVEDEE) is disordered. The segment covering 63 to 72 (SSRGGSLRGS) has biased composition (low complexity).

In the N-terminal section; belongs to the glycosyltransferase 20 family. The protein in the C-terminal section; belongs to the gob-1 trehalose phosphatase family.

The catalysed reaction is D-glucose 6-phosphate + UDP-alpha-D-glucose = alpha,alpha-trehalose 6-phosphate + UDP + H(+). Catalyzes the production of trehalose from glucose-6-phosphate and UDP-alpha-D-glucose in a 2 step process. This Aphelenchoides avenae (Mycophagous nematode worm) protein is Alpha,alpha-trehalose-phosphate synthase [UDP-forming] 1 (tps-1).